The sequence spans 120 residues: Small ribosomal subunit protein uS13m (120 aa).

This sequence belongs to the universal ribosomal protein uS13 family. In terms of assembly, part of the small ribosomal subunit.

The protein resides in the mitochondrion. In terms of biological role, located at the top of the head of the small subunit, it contacts several helices of the 18S rRNA. This is Small ribosomal subunit protein uS13m (RPS13) from Marchantia polymorpha (Common liverwort).